A 147-amino-acid chain; its full sequence is Gastrula-specific protein 17 (147 aa).

Residues 1-119 (MSQNLDFLAL…TQVYGNHQPG (119 aa)) are disordered. Composition is skewed to polar residues over residues 20-36 (SPTS…STPP), 45-57 (RQIS…YTNP), and 74-88 (LLQN…SPTA).

The chain is Gastrula-specific protein 17 (gs17) from Xenopus laevis (African clawed frog).